The primary structure comprises 150 residues: UPF0756 membrane protein ABSDF1616 (150 aa).

Helical transmembrane passes span 1–21 (MLAQFDVNLVVLLVLLICGLL), 45–65 (FFPYIQAHGLNLGILILTIGV), 83–103 (FISFKSLVAIAIGLLVAWLGG), and 115–135 (VVAGLLIGTVAGVALLRGVPV).

This sequence belongs to the UPF0756 family.

It is found in the cell membrane. The protein is UPF0756 membrane protein ABSDF1616 of Acinetobacter baumannii (strain SDF).